A 160-amino-acid polypeptide reads, in one-letter code: Bcl-2-like gene 16 protein (160 aa).

A BH1 motif is present at residues L64 to A84.

Belongs to the Bcl-2 family.

This chain is Bcl-2-like gene 16 protein (16), found in Saimiri sciureus (Common squirrel monkey).